A 325-amino-acid chain; its full sequence is UPF0285 protein MM_0679 (325 aa).

Belongs to the UPF0285 family.

The polypeptide is UPF0285 protein MM_0679 (Methanosarcina mazei (strain ATCC BAA-159 / DSM 3647 / Goe1 / Go1 / JCM 11833 / OCM 88) (Methanosarcina frisia)).